The sequence spans 152 residues: MAVALPEVVEELLSEMAAAVRDSARIPDELLLSLEFVFGSSAIQALDLVDRESVTLISSPSGRRVYQVLGSSGKTYTCLASCHYCSCPAFSFSVLRKSDSLLCKHLLAIYLSQLLRNCQQLHVSDKQLTDLLMEDTRRIKGAAGTWTSKTEA.

Residues 76–114 form an SWIM-type zinc finger; it reads YTCLASCHYCSCPAFSFSVLRKSDSLLCKHLLAIYLSQL.

The protein belongs to the SWS1 family. As to quaternary structure, interacts with RAD51D and XRCC3; involved in homologous recombination repair. Interacts with SWSAP1; they form a functional complex involved in homologous recombination repair and stabilize each other.

Its subcellular location is the nucleus. Functionally, involved in early stages of the homologous recombination repair (HRR) pathway of double-stranded DNA breaks arising during DNA replication or induced by DNA-damaging agents. Required for meiotic progression, hence for fertility. In Mus musculus (Mouse), this protein is Zinc finger SWIM domain-containing protein 7 (Zswim7).